A 118-amino-acid polypeptide reads, in one-letter code: Large ribosomal subunit protein bL20 (118 aa).

Belongs to the bacterial ribosomal protein bL20 family.

Functionally, binds directly to 23S ribosomal RNA and is necessary for the in vitro assembly process of the 50S ribosomal subunit. It is not involved in the protein synthesizing functions of that subunit. The protein is Large ribosomal subunit protein bL20 of Agathobacter rectalis (strain ATCC 33656 / DSM 3377 / JCM 17463 / KCTC 5835 / VPI 0990) (Eubacterium rectale).